An 814-amino-acid chain; its full sequence is MSTVLCCVLVLLISVALCMDFEERPSSSWRSEQTMFLKSHKSRNLLSLRDLQQPDHGKMKRSEESAQNQCESLHGYQSTLQNDTHTHNFNDLSGSVSLAWVGDGTGVLLVLTTFQVPLFIMRFGQSKLYRSEDYGKTFQDITDLINNTFIQTEFGIAIGPDNSGKVILTGDLAEGKVTKIFRSVDFGKSFVTSELPFHPLMQITYNPKDSNILMVYSINYDLWLSKDFGANWKKIHESVCLVKWGIDDTIFLTTNPNGSCSDRGTLELRKSLDYGKTFKTIGNRIYSFGLGGRFVFASIMTDSGSTRMIHVSVDQGETWDMAQLPTVGHEQFYSILAANNDMVFMHVDEPGDSGIGTIYISDDRGIVFSKSLERHLYTTTGGDTDFTNITSLRGVYITSVLAEDGSVQTVITFNQGGEWRPLMKPWNGVCDSTAKHPSECSLHIHASYSISMKLNVPMQPLSETNAVGLVLAHGSVGGAVSVLSPDVYVSDDGGYTWFQALKGPHHYAILDSGGLLVAVEHNPTHPISQIKFSTDEGQCWHAHNFTDDPIYFTGLASEPGARSMNVSLWGYRDTILNQYWVSVTVDFRQLLSRDCQENDYIQWLAHSSDINSPTDGCVLGYKERFLRLRRDSVCWNGRDYKVTKEPTTCPCTLTDFHDFGFYHEENSSVCVEQPDLIGHSLEFCLHGRKEQLQTSGYRKIPGDHCEEGITPERKEIDLSKKCVSNLLRTEQLTKEHSFNSAPIIAVVIIVLLISAVAGVIFIKKYVCGGRFLVHRYSVLQQHAEANGIDGLDDLDTLEGGKTHYHDDSDEDLLE.

A signal peptide spans 1–18 (MSTVLCCVLVLLISVALC). Topologically, residues 19-741 (MDFEERPSSS…LTKEHSFNSA (723 aa)) are extracellular. Disulfide bonds link cysteine 70/cysteine 539, cysteine 240/cysteine 260, and cysteine 430/cysteine 440. Asparagine 82 carries N-linked (GlcNAc...) asparagine glycosylation. A BNR 1 repeat occupies 129–140 (YRSEDYGKTFQD). Asparagine 146 is a glycosylation site (N-linked (GlcNAc...) asparagine). BNR repeat units follow at residues 181–192 (FRSVDFGKSFVT) and 223–234 (WLSKDFGANWKK). N-linked (GlcNAc...) asparagine glycosylation is present at asparagine 257. BNR repeat units follow at residues 269–280 (RKSLDYGKTFKT), 310–321 (HVSVDQGETWDM), and 359–370 (YISDDRGIVFSK). The N-linked (GlcNAc...) asparagine glycan is linked to asparagine 388. The stretch at 410 to 421 (VITFNQGGEWRP) is one BNR 7 repeat. BNR repeat units follow at residues 488-499 (YVSDDGGYTWFQ) and 531-542 (KFSTDEGQCWHA). Residues asparagine 544 and asparagine 565 are each glycosylated (N-linked (GlcNAc...) asparagine). Intrachain disulfides connect cysteine 595-cysteine 634, cysteine 617-cysteine 649, cysteine 651-cysteine 705, and cysteine 684-cysteine 722. N-linked (GlcNAc...) asparagine glycosylation occurs at asparagine 666. The helical transmembrane segment at 742–762 (PIIAVVIIVLLISAVAGVIFI) threads the bilayer. Residues 763–814 (KKYVCGGRFLVHRYSVLQQHAEANGIDGLDDLDTLEGGKTHYHDDSDEDLLE) are Cytoplasmic-facing. Cysteine 767 carries the S-palmitoyl cysteine lipid modification. Positions 771–776 (FLVHRY) match the Endocytosis signal motif.

This sequence belongs to the VPS10-related sortilin family. SORT1 subfamily. In terms of assembly, interacts with the cytosolic adapter proteins GGA1 and GGA2. Interacts with the heterotrimeric retromer cargo-selective complex (CSC), also described as vacuolar protein sorting subcomplex (VPS), formed by VPS26 (VPS26A or VPS26B), VPS29 and VPS35; which is involved in retrograde trafficking of the receptor from endosomes to the Golgi apparatus. In terms of processing, palmitoylated. Undergoes cysteine S-palmitoylation which promotes the partitioning of the receptor into an endosomal membrane subdomain where it can interact with the retromer cargo-selective complex which mediates its retrograde trafficking to the Golgi apparatus.

The protein localises to the golgi apparatus. The protein resides in the golgi stack membrane. It localises to the endosome membrane. Its subcellular location is the endoplasmic reticulum membrane. It is found in the nucleus membrane. The protein localises to the cell membrane. The protein resides in the lysosome membrane. Its function is as follows. Functions as a sorting receptor in the Golgi compartment and as a clearance receptor on the cell surface. Required for protein transport from the Golgi apparatus to the lysosomes by a pathway that is independent of the mannose-6-phosphate receptor (M6PR). Lysosomal proteins bind specifically to the receptor in the Golgi apparatus and the resulting receptor-ligand complex is transported to an acidic prelysosomal compartment where the low pH mediates the dissociation of the complex. The receptor is then recycled back to the Golgi for another round of trafficking through its binding to the retromer. Also required for protein transport from the Golgi apparatus to the endosomes. May also mediate transport from the endoplasmic reticulum to the Golgi. The chain is Sortilin (sort1) from Danio rerio (Zebrafish).